The chain runs to 329 residues: Gamma-resorcylate decarboxylase (329 aa).

The Zn(2+) site is built by Glu-8, His-10, His-167, and Asp-290. Asp-290 is an active-site residue.

It belongs to the metallo-dependent hydrolases superfamily. ACMSD family. Requires Zn(2+) as cofactor.

It catalyses the reaction 2,6-dihydroxybenzoate + H(+) = resorcinol + CO2. Its pathway is aromatic compound metabolism. Its function is as follows. Involved in the gamma-resorcylate (2,6-dihydroxybenzoate) catabolism. Catalyzes the reversible decarboxylation of gamma-resorcylate to resorcinol. The sequence is that of Gamma-resorcylate decarboxylase from Rhodococcus jostii (strain RHA1).